A 108-amino-acid polypeptide reads, in one-letter code: Nucleoid-associated protein Lcho_1975 (108 aa).

It belongs to the YbaB/EbfC family. In terms of assembly, homodimer.

Its subcellular location is the cytoplasm. It localises to the nucleoid. Its function is as follows. Binds to DNA and alters its conformation. May be involved in regulation of gene expression, nucleoid organization and DNA protection. The protein is Nucleoid-associated protein Lcho_1975 of Leptothrix cholodnii (strain ATCC 51168 / LMG 8142 / SP-6) (Leptothrix discophora (strain SP-6)).